A 403-amino-acid polypeptide reads, in one-letter code: Phosphopentomutase (403 aa).

Residues D13, D298, H303, D339, H340, and H351 each contribute to the Mn(2+) site.

It belongs to the phosphopentomutase family. It depends on Mn(2+) as a cofactor.

The protein resides in the cytoplasm. It catalyses the reaction 2-deoxy-alpha-D-ribose 1-phosphate = 2-deoxy-D-ribose 5-phosphate. The enzyme catalyses alpha-D-ribose 1-phosphate = D-ribose 5-phosphate. The protein operates within carbohydrate degradation; 2-deoxy-D-ribose 1-phosphate degradation; D-glyceraldehyde 3-phosphate and acetaldehyde from 2-deoxy-alpha-D-ribose 1-phosphate: step 1/2. Functionally, isomerase that catalyzes the conversion of deoxy-ribose 1-phosphate (dRib-1-P) and ribose 1-phosphate (Rib-1-P) to deoxy-ribose 5-phosphate (dRib-5-P) and ribose 5-phosphate (Rib-5-P), respectively. This chain is Phosphopentomutase, found in Streptococcus equi subsp. zooepidemicus (strain MGCS10565).